A 184-amino-acid chain; its full sequence is Protein GrpE (184 aa).

The segment covering 1–17 (MQHEDKTPEQQENKTPE) has biased composition (basic and acidic residues). The tract at residues 1–39 (MQHEDKTPEQQENKTPETELQQENAPATPQEAGAAGSID) is disordered. Positions 18-27 (TELQQENAPA) are enriched in polar residues.

The protein belongs to the GrpE family. Homodimer.

It is found in the cytoplasm. In terms of biological role, participates actively in the response to hyperosmotic and heat shock by preventing the aggregation of stress-denatured proteins, in association with DnaK and GrpE. It is the nucleotide exchange factor for DnaK and may function as a thermosensor. Unfolded proteins bind initially to DnaJ; upon interaction with the DnaJ-bound protein, DnaK hydrolyzes its bound ATP, resulting in the formation of a stable complex. GrpE releases ADP from DnaK; ATP binding to DnaK triggers the release of the substrate protein, thus completing the reaction cycle. Several rounds of ATP-dependent interactions between DnaJ, DnaK and GrpE are required for fully efficient folding. The chain is Protein GrpE from Methylobacillus flagellatus (strain ATCC 51484 / DSM 6875 / VKM B-1610 / KT).